The following is a 371-amino-acid chain: Spermatogenic leucine zipper protein 1 (371 aa).

Coiled-coil stretches lie at residues 96-148 (EVSE…TVQD) and 177-289 (FPHI…QKEE). At S98 the chain carries Phosphoserine. The segment at 110 to 120 (INKELVKKLLA) is helix-loop-helix motif. A basic motif region spans residues 121-188 (SLDLGKKENA…HIQEENIRLR (68 aa)). S202 bears the Phosphoserine mark. The span at 223–240 (KTLKNNGTHSPTQTNNES) shows a compositional bias: polar residues. The interval 223–246 (KTLKNNGTHSPTQTNNESAKQELE) is disordered. A leucine-zipper region spans residues 245–266 (LEEQVKRLKEDTYSLHLIATLL).

In terms of processing, phosphorylated by MAPK1/ERK2 and MAPK3/ERK1.

Its subcellular location is the cytoplasm. It is found in the nucleus. Transcription factor that binds to the DNA sequence 5'-CANNTG-3'(E box) and the G-box motif. May play an important role in the regulation of cell proliferation and differentiation during spermatogenesis. This is Spermatogenic leucine zipper protein 1 (SPZ1) from Bos taurus (Bovine).